Reading from the N-terminus, the 992-residue chain is Translation initiation factor IF-2 (992 aa).

2 disordered regions span residues 154-173 (RRLR…EREA) and 338-399 (AAPG…RPES). Residues 492–661 (PRAPVVTVMG…LLQAEVLELK (170 aa)) enclose the tr-type G domain. Positions 501–508 (GHVDHGKT) are G1. 501–508 (GHVDHGKT) lines the GTP pocket. A G2 region spans residues 526 to 530 (GITQH). Positions 547 to 550 (DTPG) are G3. Residues 547 to 551 (DTPGH) and 601 to 604 (NKID) contribute to the GTP site. Residues 601–604 (NKID) form a G4 region. The tract at residues 637-639 (SAH) is G5.

The protein belongs to the TRAFAC class translation factor GTPase superfamily. Classic translation factor GTPase family. IF-2 subfamily.

The protein localises to the cytoplasm. Functionally, one of the essential components for the initiation of protein synthesis. Protects formylmethionyl-tRNA from spontaneous hydrolysis and promotes its binding to the 30S ribosomal subunits. Also involved in the hydrolysis of GTP during the formation of the 70S ribosomal complex. This chain is Translation initiation factor IF-2, found in Polaromonas naphthalenivorans (strain CJ2).